The primary structure comprises 123 residues: Proteasome assembly chaperone 4 (123 aa).

Belongs to the PSMG4 family. Interacts with PSMG3. Associates with alpha subunits of the 20S proteasome.

Functionally, chaperone protein which promotes assembly of the 20S proteasome. The sequence is that of Proteasome assembly chaperone 4 from Homo sapiens (Human).